We begin with the raw amino-acid sequence, 417 residues long: Probable secreted beta-glucosidase PSU1 (417 aa).

The first 18 residues, Met1–Ala18, serve as a signal peptide directing secretion.

This sequence belongs to the SUN family.

The protein resides in the secreted. The protein localises to the cell wall. Involved in cell wall synthesis. May be required for the activation of 1,3-beta-glucan synthase. In Schizosaccharomyces pombe (strain 972 / ATCC 24843) (Fission yeast), this protein is Probable secreted beta-glucosidase PSU1 (psu1).